The chain runs to 925 residues: Serine/threonine-protein kinase SIK2 (925 aa).

Positions tyrosine 20–methionine 271 constitute a Protein kinase domain. Position 25 is a phosphothreonine (threonine 25). Residues leucine 26 to valine 34 and lysine 49 contribute to the ATP site. N6-acetyllysine; by EP300 is present on lysine 53. The active-site Proton acceptor is the aspartate 142. At threonine 175 the chain carries Phosphothreonine. In terms of domain architecture, UBA spans glutamate 295–glutamate 335. A Phosphoserine modification is found at serine 534. The tract at residues alanine 564–alanine 586 is disordered. Phosphoserine is present on serine 587. Disordered stretches follow at residues proline 630–serine 674, serine 742–proline 776, and glutamine 800–aspartate 895. Composition is skewed to low complexity over residues glutamine 648–serine 659 and serine 742–glutamine 756. Positions alanine 765 to leucine 774 are enriched in polar residues. The span at proline 808–glutamine 820 shows a compositional bias: low complexity. Positions glutamine 821–glutamine 833 are enriched in pro residues.

This sequence belongs to the protein kinase superfamily. CAMK Ser/Thr protein kinase family. SNF1 subfamily. In terms of assembly, interacts with and phosphorylates TORC2/CRTC2. Mg(2+) is required as a cofactor. Post-translationally, phosphorylated at Thr-175 by STK11/LKB1 in complex with STE20-related adapter-alpha (STRADA) pseudo kinase and CAB39. Phosphorylated at Thr-484 in response to insulin in adipocytes. In terms of processing, acetylation at Lys-53 inhibits kinase activity. Deacetylated by HDAC6.

Its subcellular location is the cytoplasm. The protein localises to the endoplasmic reticulum membrane. It carries out the reaction L-seryl-[protein] + ATP = O-phospho-L-seryl-[protein] + ADP + H(+). The catalysed reaction is L-threonyl-[protein] + ATP = O-phospho-L-threonyl-[protein] + ADP + H(+). Activated by phosphorylation on Thr-175. In terms of biological role, serine/threonine-protein kinase that plays a role in many biological processes such as fatty acid oxidation, autophagy, immune response or glucose metabolism. Phosphorylates 'Ser-794' of IRS1 in insulin-stimulated adipocytes, potentially modulating the efficiency of insulin signal transduction. Inhibits CREB activity by phosphorylating and repressing TORCs, the CREB-specific coactivators. Phosphorylates EP300 and thus inhibits its histone acetyltransferase activity. In turn, regulates the DNA-binding ability of several transcription factors such as PPARA or MLXIPL. Also plays a role in thymic T-cell development. This chain is Serine/threonine-protein kinase SIK2 (SIK2), found in Pongo abelii (Sumatran orangutan).